A 343-amino-acid chain; its full sequence is Ribosomal RNA small subunit methyltransferase C (343 aa).

This sequence belongs to the methyltransferase superfamily. RsmC family. Monomer.

It localises to the cytoplasm. It carries out the reaction guanosine(1207) in 16S rRNA + S-adenosyl-L-methionine = N(2)-methylguanosine(1207) in 16S rRNA + S-adenosyl-L-homocysteine + H(+). Functionally, specifically methylates the guanine in position 1207 of 16S rRNA in the 30S particle. The protein is Ribosomal RNA small subunit methyltransferase C of Escherichia coli O7:K1 (strain IAI39 / ExPEC).